Here is a 496-residue protein sequence, read N- to C-terminus: Probable diguanylate cyclase DgcJ (496 aa).

2 helical membrane passes run 11–31 (FIAA…LVAS) and 305–325 (ILYF…TALI). The 123-residue stretch at 374–496 (SSVMFIAIDM…VNKQNKNSRS (123 aa)) folds into the GGDEF domain. Residue Asp382 coordinates Mg(2+). Residues Asn390, His395, and Asp399 each contribute to the substrate site. A Mg(2+)-binding site is contributed by Asp425. Asp425 functions as the Proton acceptor in the catalytic mechanism.

In terms of assembly, homodimer. Requires Mg(2+) as cofactor.

It is found in the cell inner membrane. It catalyses the reaction 2 GTP = 3',3'-c-di-GMP + 2 diphosphate. The protein operates within purine metabolism; 3',5'-cyclic di-GMP biosynthesis. Functionally, catalyzes the synthesis of cyclic-di-GMP (c-di-GMP) via the condensation of 2 GTP molecules. This Escherichia coli (strain K12) protein is Probable diguanylate cyclase DgcJ.